Here is a 296-residue protein sequence, read N- to C-terminus: Phosphatidylglycerol--prolipoprotein diacylglyceryl transferase (296 aa).

4 consecutive transmembrane segments (helical) span residues 28–48, 72–92, 110–130, and 139–159; these read WYGLCFSLGILFASLLGIYLA, FALYSLLFIIPGSRIAYILFY, GGLASHGGMLGLILWALIFSW, and LTFLFLCDLCASVFGCAAFMI. Position 160 (R160) interacts with a 1,2-diacyl-sn-glycero-3-phospho-(1'-sn-glycerol). The next 3 membrane-spanning stretches (helical) occupy residues 197-217, 226-246, and 263-283; these read VQLYEGMSYLLLSIILFFLSY, GWVTSLGLVGISLIRFFAEFF, and GQILSFPLFVFGLCLGIACFL.

It belongs to the Lgt family.

It localises to the cell inner membrane. It carries out the reaction L-cysteinyl-[prolipoprotein] + a 1,2-diacyl-sn-glycero-3-phospho-(1'-sn-glycerol) = an S-1,2-diacyl-sn-glyceryl-L-cysteinyl-[prolipoprotein] + sn-glycerol 1-phosphate + H(+). Its pathway is protein modification; lipoprotein biosynthesis (diacylglyceryl transfer). Catalyzes the transfer of the diacylglyceryl group from phosphatidylglycerol to the sulfhydryl group of the N-terminal cysteine of a prolipoprotein, the first step in the formation of mature lipoproteins. This is Phosphatidylglycerol--prolipoprotein diacylglyceryl transferase from Chlamydia caviae (strain ATCC VR-813 / DSM 19441 / 03DC25 / GPIC) (Chlamydophila caviae).